The sequence spans 187 residues: MLSLDNYSYVHNITTQTNIDLSSQQTIHLASINGKGYIIFLRFFCEGSSACFTNVKFSVKANGLVLYSFRYIQLLELGQAIATAIPSSSQGFSTLLSNYNVLISSPIGTLPQLTLYDSYDNRYGAMLQPAFPLPFVNTLSLDVDILPVSQSSYDPIPYSLNDNQISTNAPTGKGNISIEYLLYNCLV.

Cysteine 45 and cysteine 51 are joined by a disulfide.

The protein resides in the virion. VP10 self-assembles, together with capsid protein VP4, to form an icosahedral caspid of 87 nm in diameter, with a T=43 symmetry and composed of 420 hexamers and 12 pentamers. VP4 proteins arrange into hexons, while VP10 proteins form the pentameric densities located at the 5-fold axes in the virion. The stoichiometry of VP4:VP10 is 42:1. The protein is Capsid protein VP10 of Sulfolobus polyhedral virus 1 (SPV1).